Consider the following 185-residue polypeptide: Peptidyl-tRNA hydrolase (185 aa).

TRNA is bound at residue tyrosine 14. The active-site Proton acceptor is histidine 19. TRNA-binding residues include tyrosine 65, asparagine 67, and asparagine 113.

The protein belongs to the PTH family. As to quaternary structure, monomer.

Its subcellular location is the cytoplasm. It carries out the reaction an N-acyl-L-alpha-aminoacyl-tRNA + H2O = an N-acyl-L-amino acid + a tRNA + H(+). Functionally, hydrolyzes ribosome-free peptidyl-tRNAs (with 1 or more amino acids incorporated), which drop off the ribosome during protein synthesis, or as a result of ribosome stalling. Its function is as follows. Catalyzes the release of premature peptidyl moieties from peptidyl-tRNA molecules trapped in stalled 50S ribosomal subunits, and thus maintains levels of free tRNAs and 50S ribosomes. The sequence is that of Peptidyl-tRNA hydrolase from Rickettsia conorii (strain ATCC VR-613 / Malish 7).